Here is a 224-residue protein sequence, read N- to C-terminus: F420-dependent NADP reductase (224 aa).

NADP(+) contacts are provided by residues 9 to 12 (TGDQ), 31 to 32 (SR), lysine 36, valine 74, valine 100, and alanine 145.

This sequence belongs to the F420-dependent NADP reductase family. In terms of assembly, homotetramer.

It carries out the reaction reduced coenzyme F420-(gamma-L-Glu)(n) + NADP(+) = oxidized coenzyme F420-(gamma-L-Glu)(n) + NADPH + 2 H(+). Catalyzes the reduction of NADP(+) with F420H(2) via hydride transfer, and the reverse reaction, i.e. the reduction of F420 with NADPH. Probably functions in the regeneration of NADPH required in biosynthetic reactions. This is F420-dependent NADP reductase from Methanothermobacter marburgensis (strain ATCC BAA-927 / DSM 2133 / JCM 14651 / NBRC 100331 / OCM 82 / Marburg) (Methanobacterium thermoautotrophicum).